The chain runs to 239 residues: Serine protease SplF (239 aa).

The first 36 residues, 1 to 36 (MNKNIIIKSIAALTILTSITGVGTTVVDGIQQTAKA), serve as a signal peptide directing secretion. Catalysis depends on charge relay system residues His-75, Asp-114, and Ser-192.

This sequence belongs to the peptidase S1B family.

The protein resides in the secreted. This is Serine protease SplF (splF) from Staphylococcus aureus (strain MSSA476).